A 499-amino-acid polypeptide reads, in one-letter code: Lysine--tRNA ligase (499 aa).

Mg(2+)-binding residues include E408 and E415.

This sequence belongs to the class-II aminoacyl-tRNA synthetase family. Homodimer. Mg(2+) is required as a cofactor.

The protein resides in the cytoplasm. The enzyme catalyses tRNA(Lys) + L-lysine + ATP = L-lysyl-tRNA(Lys) + AMP + diphosphate. The sequence is that of Lysine--tRNA ligase from Bacillus cytotoxicus (strain DSM 22905 / CIP 110041 / 391-98 / NVH 391-98).